A 690-amino-acid chain; its full sequence is Probable serine/threonine-protein kinase drkB (690 aa).

The signal sequence occupies residues 1–24 (MKVQIVFFSITVFIFVLFLLSVES). Residues 51–110 (DSKSSEHTTSSSSSSNSKNKGDSSSSSSNSGSSSNSIISGDSNSKDAPTTSSDSLSPATP) form a disordered region. Over residues 57–96 (HTTSSSSSSNSKNKGDSSSSSSNSGSSSNSIISGDSNSKD) the composition is skewed to low complexity. The span at 97 to 107 (APTTSSDSLSP) shows a compositional bias: polar residues. N-linked (GlcNAc...) asparagine glycosylation is found at Asn-134, Asn-180, Asn-220, and Asn-250. The segment at 287-335 (TITPTPTITPTPTITPTVTPTATPSTTPSTTPTTTPSTPTPTPTKSPYS) is disordered. Residues 296-323 (PTPTITPTVTPTATPSTTPSTTPTTTPS) are compositionally biased toward low complexity. Residues 346–366 (IIIASSITGGLLISIFSFVFI) form a helical membrane-spanning segment. In terms of domain architecture, Protein kinase spans 391-644 (IKIGVRIGKG…EQCLEILESI (254 aa)). ATP-binding positions include 397 to 405 (IGKGNFGEV) and Lys-418. Catalysis depends on Asp-514, which acts as the Proton acceptor. Residues 649–690 (FDDIPVNNNNNNNSNNNENNNENNNNSDNNNNDINYSNRVIN) are disordered. The segment covering 655–681 (NNNNNNNSNNNENNNENNNNSDNNNND) has biased composition (low complexity).

It belongs to the protein kinase superfamily. TKL Ser/Thr protein kinase family.

Its subcellular location is the membrane. The catalysed reaction is L-seryl-[protein] + ATP = O-phospho-L-seryl-[protein] + ADP + H(+). It carries out the reaction L-threonyl-[protein] + ATP = O-phospho-L-threonyl-[protein] + ADP + H(+). The protein is Probable serine/threonine-protein kinase drkB (drkB) of Dictyostelium discoideum (Social amoeba).